Consider the following 349-residue polypeptide: Phosphorylcholine phosphatase (349 aa).

Positions 1 to 22 (MTFAKGILAALALAAAVGQASA) are cleaved as a signal peptide. The active-site Nucleophile is the Asp-53. Mg(2+) contacts are provided by Asp-53 and Asp-55. Catalysis depends on Asp-55, which acts as the Proton donor. A disulfide bridge links Cys-109 with Cys-116. Asp-284 contributes to the Mg(2+) binding site.

It belongs to the HAD-like hydrolase superfamily. Monomer. Homodimer. Homotetramer. The cofactor is Mg(2+).

Its subcellular location is the periplasm. The enzyme catalyses phosphocholine + H2O = choline + phosphate. It catalyses the reaction phosphoethanolamine + H2O = ethanolamine + phosphate. Activity is inhibited by high concentrations of phosphorylcholine, phosphorylethanolamine, choline or betaine. Displays different properties depending on the substrate utilized, the pH conditions as well as the presence or absence of metal ions. At pH 5, activity is inhibited by Al(3+) ions. At pH 7.4, the enzyme cannot catalyze the hydrolysis of pNPP, phosphorylethanolamine is a poor substrate in either the presence or absence of divalent cations, and activity measured with phosphorylcholine is independent of divalent cations or is not inhibited by Al(3+) ions. Mg(2+) produces identical activation at pH 5.0 and 7.4, but Zn(2+) is an activator at pH 5.0 and becomes an inhibitor at pH 7.4. This inhibition at pH 7.4 may be due to a transition from octahedral to tetrahedral coordination geometry, which is produced by hydrolysis of the Zn-hexacoordinated complex. Functionally, catalyzes the hydrolysis of phosphorylcholine (PCho) to produce choline and inorganic phosphate. Can also hydrolyze phosphorylethanolamine and the nonphysiological substrate p-nitrophenylphosphate (pNPP). Shows higher affinity and catalytic efficiency with phosphorylcholine as substrate. Is probably involved in virulence. The bacteria may break down various host compounds or host cell membranes through the coordinated action of phospholipase C and phosphocholine phosphatase. The final consequence of the action of these enzymes is an increase of the free choline concentration, which may promote the pathogenicity of P.aeruginosa. The sequence is that of Phosphorylcholine phosphatase from Pseudomonas aeruginosa (strain ATCC 15692 / DSM 22644 / CIP 104116 / JCM 14847 / LMG 12228 / 1C / PRS 101 / PAO1).